We begin with the raw amino-acid sequence, 197 residues long: dITP/XTP pyrophosphatase (197 aa).

Substrate is bound at residue 10 to 15; it reads TKNQGK. Asp-70 (proton acceptor) is an active-site residue. Residue Asp-70 participates in Mg(2+) binding. Substrate contacts are provided by residues Ser-71, 151–154, Lys-173, and 178–179; these read FGYD and HR.

It belongs to the HAM1 NTPase family. Homodimer. Requires Mg(2+) as cofactor.

The enzyme catalyses XTP + H2O = XMP + diphosphate + H(+). The catalysed reaction is dITP + H2O = dIMP + diphosphate + H(+). It carries out the reaction ITP + H2O = IMP + diphosphate + H(+). Pyrophosphatase that catalyzes the hydrolysis of nucleoside triphosphates to their monophosphate derivatives, with a high preference for the non-canonical purine nucleotides XTP (xanthosine triphosphate), dITP (deoxyinosine triphosphate) and ITP. Seems to function as a house-cleaning enzyme that removes non-canonical purine nucleotides from the nucleotide pool, thus preventing their incorporation into DNA/RNA and avoiding chromosomal lesions. In Symbiobacterium thermophilum (strain DSM 24528 / JCM 14929 / IAM 14863 / T), this protein is dITP/XTP pyrophosphatase.